The chain runs to 358 residues: Alanine racemase (358 aa).

Lys35 functions as the Proton acceptor; specific for D-alanine in the catalytic mechanism. An N6-(pyridoxal phosphate)lysine modification is found at Lys35. Arg131 contacts substrate. The Proton acceptor; specific for L-alanine role is filled by Tyr253. Met301 lines the substrate pocket.

This sequence belongs to the alanine racemase family. The cofactor is pyridoxal 5'-phosphate.

The catalysed reaction is L-alanine = D-alanine. The protein operates within amino-acid biosynthesis; D-alanine biosynthesis; D-alanine from L-alanine: step 1/1. In terms of biological role, catalyzes the interconversion of L-alanine and D-alanine. May also act on other amino acids. This is Alanine racemase (alr) from Alteromonas mediterranea (strain DSM 17117 / CIP 110805 / LMG 28347 / Deep ecotype).